The sequence spans 141 residues: MNNNNNNNNNNNNNNNNNNNNNNNNNSYDSNHSSSSYTSENQNREQQFVFIPEEELERQSLLKKKDNLSYSINKDEIIIINNEDENDQNQTKDSTNPIVLRAKKVVDSFFCKIILVFICLVAIYSLVVIKCDGFHFNHCSP.

Over residues 1-39 the composition is skewed to low complexity; it reads MNNNNNNNNNNNNNNNNNNNNNNNNNSYDSNHSSSSYTS. The tract at residues 1 to 48 is disordered; the sequence is MNNNNNNNNNNNNNNNNNNNNNNNNNSYDSNHSSSSYTSENQNREQQF. The helical transmembrane segment at 109–129 threads the bilayer; the sequence is FFCKIILVFICLVAIYSLVVI.

It localises to the membrane. This is an uncharacterized protein from Dictyostelium discoideum (Social amoeba).